Reading from the N-terminus, the 101-residue chain is DNA-binding protein Fis (101 aa).

The segment at residues 77–96 (QTRAANMLGINRGTLRKKLK) is a DNA-binding region (H-T-H motif).

It belongs to the transcriptional regulatory Fis family. As to quaternary structure, homodimer.

Activates ribosomal RNA transcription. Plays a direct role in upstream activation of rRNA promoters. In Shewanella loihica (strain ATCC BAA-1088 / PV-4), this protein is DNA-binding protein Fis.